Consider the following 118-residue polypeptide: UPF0102 protein Nwi_0116 (118 aa).

It belongs to the UPF0102 family.

The polypeptide is UPF0102 protein Nwi_0116 (Nitrobacter winogradskyi (strain ATCC 25391 / DSM 10237 / CIP 104748 / NCIMB 11846 / Nb-255)).